We begin with the raw amino-acid sequence, 378 residues long: Odorant receptor Or2 (378 aa).

A topological domain (cytoplasmic) is located at residue Met1. The helical transmembrane segment at 2–22 (LIEECPIIGVNVRVWLFWSYL) threads the bilayer. Over 23 to 29 (RRPRLSR) the chain is Extracellular. The helical transmembrane segment at 30 to 50 (FLVGCIPVAVLNVFQFLKLYS) threads the bilayer. The Cytoplasmic portion of the chain corresponds to 51–59 (SWGDMSELI). The chain crosses the membrane as a helical span at residues 60–80 (INGYFTVLYFNLVLRTSFLVI). Topologically, residues 81–120 (NRRKFETFFEGVAAEYALLEKNDDIRPVLERYTRRGRMLS) are extracellular. The chain crosses the membrane as a helical span at residues 121-141 (ISNLWLGAFISACFVTYPLFV). Residues 142–164 (PGRGLPYGVTIPGVDVLATPTYQ) lie on the Cytoplasmic side of the membrane. Residues 165 to 185 (VVFVLQVYLTFPACCMYIPFT) traverse the membrane as a helical segment. Topologically, residues 186 to 254 (SFYATCTLFA…HDLNSLVTHL (69 aa)) are extracellular. A helical membrane pass occupies residues 255 to 275 (CLLEFLSFGMMLCALLFLLSI). Residues 276-278 (SNQ) are Cytoplasmic-facing. A helical transmembrane segment spans residues 279–299 (LAQMIMIGSYIFMILSQMFAF). Residues 300 to 378 (YWHANEVLEQ…YFTLLRRVYN (79 aa)) are Extracellular-facing. N-linked (GlcNAc...) asparagine glycosylation occurs at Asn364.

It belongs to the insect chemoreceptor superfamily. Heteromeric odorant receptor channel (TC 1.A.69) family. Or30a subfamily. As to expression, expressed in male and female antennae and maxillary palps.

It is found in the cell membrane. Odorant receptor which plays a critical role in the anthropophilic host-seeking behavior; establishes the host preference to transmit malaria. This chain is Odorant receptor Or2 (OR2), found in Anopheles gambiae (African malaria mosquito).